The primary structure comprises 123 residues: Guanine nucleotide exchange factor MSS4 (123 aa).

Methionine 1 carries the N-acetylmethionine modification. Positions 9-123 (ELVSAEGRNR…YVALERVSHE (115 aa)) constitute an MSS4 domain. Cysteine 23, cysteine 26, cysteine 94, and cysteine 97 together coordinate Zn(2+).

The protein belongs to the DSS4/MSS4 family. As to quaternary structure, interacts with RAB8A. As to expression, ubiquitous.

Its function is as follows. Guanine-nucleotide-releasing protein that acts on members of the SEC4/YPT1/RAB subfamily. Stimulates GDP release from both YPT1, RAB3A and RAB10, but is less active on these proteins than on the SEC4 protein. Might play a general role in vesicular transport. The protein is Guanine nucleotide exchange factor MSS4 (RABIF) of Homo sapiens (Human).